Reading from the N-terminus, the 207-residue chain is Hydrogenase expression/formation protein HoxM (207 aa).

Ni(2+)-binding residues include glutamate 19, aspartate 65, and histidine 96.

It belongs to the peptidase A31 family.

Functionally, not known. Could be involved in the processing of hydrogenase. In Azotobacter vinelandii, this protein is Hydrogenase expression/formation protein HoxM (hoxM).